The primary structure comprises 210 residues: Kinetochore protein Spc25 (210 aa).

Residues threonine 42–isoleucine 106 are a coiled coil.

Belongs to the SPC25 family. As to quaternary structure, component of the Ndc80 complex, which is composed of Ndc80, Nuf2 and Spc25.

The protein localises to the nucleus. Its subcellular location is the chromosome. It localises to the centromere. It is found in the kinetochore. Acts as a component of the essential kinetochore-associated Ndc80 complex, which is required for chromosome segregation and spindle checkpoint activity during meiosis and mitosis. Required for kinetochore integrity and the organization of stable microtubule binding sites in the outer plate of the kinetochore. Participates in SAC signaling that responds specifically to disruptions in spindle microtubule dynamics. The NDC80 complex synergistically enhances the affinity of the SKA1 complex for microtubules and may allow the NDC80 complex to track depolymerizing microtubules. This chain is Kinetochore protein Spc25, found in Drosophila virilis (Fruit fly).